The chain runs to 46 residues: Mu-segestritoxin-Sf1f (46 aa).

4 disulfides stabilise this stretch: Cys-3-Cys-19, Cys-10-Cys-22, Cys-18-Cys-42, and Cys-24-Cys-40. A keys region for toxin activity region spans residues 31-33 (RPW).

It belongs to the neurotoxin 16 (SFI) family. In terms of tissue distribution, expressed by the venom gland.

The protein resides in the secreted. Its function is as follows. Insecticidal toxin. It inhibits insect voltage-gated sodium channels (Nav) by partially blocking the channel pore in DUM neurons from the American cockroach, not by acting as a gating modifier. The inhibition is only partially reversible after prolonged washout. In vivo, the toxin causes flaccid paralysis followed by death when injected into Heliothis virescens larvae. It also causes uncoordinated movements followed by full paralysis to sheep blowflies (Lucilia cuprina). When the toxin is fused to snowdrop lectin, it is orally active against larvae of the tomato moth (Laconobia oleracea), the rice brown planthopper (Nilaparvata lugens), and the peach-potato aphid (Myzus persicae). This is Mu-segestritoxin-Sf1f from Segestria florentina (Tube-web spider).